A 612-amino-acid polypeptide reads, in one-letter code: Siderophore iron transporter 1 (612 aa).

Phosphoserine occurs at positions 5, 21, 22, 36, and 41. Helical transmembrane passes span 91–111 (ISFY…SFQA), 125–145 (FAGH…SAAI), 159–179 (LEAF…MAAS), 188–208 (GSVL…IFMA), 218–238 (LVLG…PRVA), 249–269 (WGIA…LAVY), 299–319 (IIGL…ISLA), 331–351 (FIVM…YEIF), 365–385 (EPTI…FYCW), 406–426 (YISY…GILI), 434–453 (WYFV…MIRY), 464–484 (IMPQ…LTVA), 495–515 (AIVT…GSAI), and 573–593 (ILTS…WFVA).

It belongs to the major facilitator superfamily.

Its subcellular location is the membrane. In terms of biological role, involved in the transport of siderophore iron and so has a role in iron homeostasis. The chain is Siderophore iron transporter 1 (str1) from Schizosaccharomyces pombe (strain 972 / ATCC 24843) (Fission yeast).